The chain runs to 186 residues: FMN reductase (NADPH) (186 aa).

The protein belongs to the SsuE family.

It catalyses the reaction FMNH2 + NADP(+) = FMN + NADPH + 2 H(+). This is FMN reductase (NADPH) (msuE) from Pseudomonas aeruginosa (strain ATCC 15692 / DSM 22644 / CIP 104116 / JCM 14847 / LMG 12228 / 1C / PRS 101 / PAO1).